A 1373-amino-acid chain; its full sequence is DNA-directed RNA polymerase subunit beta (1373 aa).

This sequence belongs to the RNA polymerase beta chain family. As to quaternary structure, the RNAP catalytic core consists of 2 alpha, 1 beta, 1 beta' and 1 omega subunit. When a sigma factor is associated with the core the holoenzyme is formed, which can initiate transcription.

It carries out the reaction RNA(n) + a ribonucleoside 5'-triphosphate = RNA(n+1) + diphosphate. DNA-dependent RNA polymerase catalyzes the transcription of DNA into RNA using the four ribonucleoside triphosphates as substrates. The protein is DNA-directed RNA polymerase subunit beta of Rickettsia rickettsii (strain Iowa).